The following is a 308-amino-acid chain: Probable manganese-dependent inorganic pyrophosphatase (308 aa).

The Mn(2+) site is built by H9, D13, D15, D75, H97, and D149.

It belongs to the PPase class C family. It depends on Mn(2+) as a cofactor.

It is found in the cytoplasm. It carries out the reaction diphosphate + H2O = 2 phosphate + H(+). This chain is Probable manganese-dependent inorganic pyrophosphatase, found in Enterococcus faecalis (strain ATCC 700802 / V583).